Here is a 187-residue protein sequence, read N- to C-terminus: Guanylate kinase (187 aa).

Ser2 is subject to N-acetylserine. Positions 2-184 (SRPIVISGPS…AYKELKDFIF (183 aa)) constitute a Guanylate kinase-like domain. 9-16 (GPSGTGKS) provides a ligand contact to ATP. GMP is bound by residues Ser35, 39–42 (RTPR), Tyr51, Glu70, 79–81 (YGS), and Asp101. Ser149 bears the Phosphoserine mark. Tyr157 is subject to Phosphotyrosine.

This sequence belongs to the guanylate kinase family. In terms of assembly, monomer.

It catalyses the reaction GMP + ATP = GDP + ADP. In terms of biological role, catalyzes the reversible transfer of the terminal phosphoryl group of ATP to the acceptor molecule GMP. Essential for recycling GMP and indirectly, cGMP. The sequence is that of Guanylate kinase (GUK1) from Saccharomyces cerevisiae (strain ATCC 204508 / S288c) (Baker's yeast).